We begin with the raw amino-acid sequence, 294 residues long: Syntaxin-19 (294 aa).

In terms of domain architecture, t-SNARE coiled-coil homology spans 209–271 (LSEIEQRHKE…NNTKEKFGLA (63 aa)).

This sequence belongs to the syntaxin family. As to quaternary structure, interacts with EGFR.

The protein resides in the cell membrane. It is found in the cytoplasm. In terms of biological role, plays a role in endosomal trafficking of the epidermal growth factor receptor (EGFR). In Pongo abelii (Sumatran orangutan), this protein is Syntaxin-19 (STX19).